We begin with the raw amino-acid sequence, 332 residues long: Aquaporin Lacbi1:317173 (332 aa).

The segment covering 1 to 20 has biased composition (polar residues); that stretch reads MSGQHQITEQSSRNPLSRVS. A disordered region spans residues 1-45; it reads MSGQHQITEQSSRNPLSRVSTLLPEKPLSPTSTYAGTQKHPEAPR. The Cytoplasmic segment spans residues 1 to 66; that stretch reads MSGQHQITEQ…RNAIRKPMAE (66 aa). The helical transmembrane segment at 67 to 87 threads the bilayer; that stretch reads FFGVALLIIFGAGSACQVVLS. Topologically, residues 88-100 are extracellular; the sequence is TNPDVASSARGSF. Residues 101 to 121 traverse the membrane as a helical segment; sequence LSINFGWAIGIAMGVWVSGGI. At 122-144 the chain is on the cytoplasmic side; that stretch reads SGGHINPAITIAMATYRGFPWRK. An NPA 1 motif is present at residues 127–129; the sequence is NPA. Residues 145–165 form a helical membrane-spanning segment; the sequence is VPSYILAQVLGGVVGAGLVYA. At 166–199 the chain is on the extracellular side; sequence NYIHAIDIFEGGHHIRTQATASLFATYALPYMTQ. Residues 200–220 form a helical membrane-spanning segment; the sequence is ASCFFSEFLATAVLSMMVFAL. Residues 221–230 lie on the Cytoplasmic side of the membrane; the sequence is TDKRNHSPTN. Residues 231–251 traverse the membrane as a helical segment; that stretch reads GLLPFALFILFVGLGASLGME. Residues 252–283 are Extracellular-facing; it reads TAYALNPARDFGPRLFLAMAGYGKALFNYRSQ. The NPA 2 signature appears at 257–259; that stretch reads NPA. The helical transmembrane segment at 284-304 threads the bilayer; that stretch reads YWLWAPIIAPVLGAQAGGLLY. Residues 305–332 lie on the Cytoplasmic side of the membrane; the sequence is DTFLNDGDNSPIKWRCASSQEHQLAEVV.

It belongs to the MIP/aquaporin (TC 1.A.8) family.

The protein localises to the membrane. It catalyses the reaction H2O(in) = H2O(out). It carries out the reaction NH4(+)(in) = NH4(+)(out). Functionally, water channel required to facilitate the transport of water across membranes. Acts as the most efficient Laccaria water channel. In addition to water, also shows strong ammonium transport activity. May be involved in fungal nitrogen (ammonium) support of the plant host in symbiosis. This is Aquaporin Lacbi1:317173 from Laccaria bicolor (strain S238N-H82 / ATCC MYA-4686) (Bicoloured deceiver).